The following is a 303-amino-acid chain: Large ribosomal subunit protein uL18 (303 aa).

The protein belongs to the universal ribosomal protein uL18 family. Component of the large ribosomal subunit (LSU).

Its subcellular location is the cytoplasm. The protein resides in the nucleus. In terms of biological role, component of the ribosome, a large ribonucleoprotein complex responsible for the synthesis of proteins in the cell. The small ribosomal subunit (SSU) binds messenger RNAs (mRNAs) and translates the encoded message by selecting cognate aminoacyl-transfer RNA (tRNA) molecules. The large subunit (LSU) contains the ribosomal catalytic site termed the peptidyl transferase center (PTC), which catalyzes the formation of peptide bonds, thereby polymerizing the amino acids delivered by tRNAs into a polypeptide chain. The nascent polypeptides leave the ribosome through a tunnel in the LSU and interact with protein factors that function in enzymatic processing, targeting, and the membrane insertion of nascent chains at the exit of the ribosomal tunnel. The protein is Large ribosomal subunit protein uL18 (RPL5) of Oikopleura dioica (Tunicate).